The primary structure comprises 151 residues: Nucleoside diphosphate kinase (151 aa).

Residues Lys11, Phe59, Arg87, Thr93, Arg104, and Asn114 each coordinate ATP. His117 acts as the Pros-phosphohistidine intermediate in catalysis.

The protein belongs to the NDK family. As to quaternary structure, homohexamer. It depends on Mg(2+) as a cofactor.

It catalyses the reaction a 2'-deoxyribonucleoside 5'-diphosphate + ATP = a 2'-deoxyribonucleoside 5'-triphosphate + ADP. It carries out the reaction a ribonucleoside 5'-diphosphate + ATP = a ribonucleoside 5'-triphosphate + ADP. Major role in the synthesis of nucleoside triphosphates other than ATP. The ATP gamma phosphate is transferred to the NDP beta phosphate via a ping-pong mechanism, using a phosphorylated active-site intermediate. The protein is Nucleoside diphosphate kinase of Ginglymostoma cirratum (Nurse shark).